The sequence spans 470 residues: ATP-dependent protease ATPase subunit HslU (470 aa).

Residues valine 22 and 64-69 (GVGKTE) contribute to the ATP site. The interval 145–187 (KKANNNTNSNNPLESLFGGSIPNFGQNNDDEEETPTDEVKTKR) is disordered. Positions 283, 348, and 420 each coordinate ATP.

This sequence belongs to the ClpX chaperone family. HslU subfamily. In terms of assembly, a double ring-shaped homohexamer of HslV is capped on each side by a ring-shaped HslU homohexamer. The assembly of the HslU/HslV complex is dependent on binding of ATP.

Its subcellular location is the cytoplasm. Functionally, ATPase subunit of a proteasome-like degradation complex; this subunit has chaperone activity. The binding of ATP and its subsequent hydrolysis by HslU are essential for unfolding of protein substrates subsequently hydrolyzed by HslV. HslU recognizes the N-terminal part of its protein substrates and unfolds these before they are guided to HslV for hydrolysis. This Staphylococcus saprophyticus subsp. saprophyticus (strain ATCC 15305 / DSM 20229 / NCIMB 8711 / NCTC 7292 / S-41) protein is ATP-dependent protease ATPase subunit HslU.